The sequence spans 758 residues: 5-methyltetrahydropteroyltriglutamate--homocysteine methyltransferase (758 aa).

5-methyltetrahydropteroyltri-L-glutamate is bound by residues 16-19 (RELK) and Lys-116. L-homocysteine-binding positions include 436 to 438 (IGS) and Glu-489. Residues 436–438 (IGS) and Glu-489 each bind L-methionine. 5-methyltetrahydropteroyltri-L-glutamate-binding positions include 520-521 (RC) and Trp-566. Residue Asp-604 participates in L-homocysteine binding. Asp-604 contacts L-methionine. Glu-610 is a 5-methyltetrahydropteroyltri-L-glutamate binding site. His-646, Cys-648, and Glu-670 together coordinate Zn(2+). His-699 (proton donor) is an active-site residue. Cys-731 lines the Zn(2+) pocket.

It belongs to the vitamin-B12 independent methionine synthase family. Zn(2+) is required as a cofactor.

It catalyses the reaction 5-methyltetrahydropteroyltri-L-glutamate + L-homocysteine = tetrahydropteroyltri-L-glutamate + L-methionine. It functions in the pathway amino-acid biosynthesis; L-methionine biosynthesis via de novo pathway; L-methionine from L-homocysteine (MetE route): step 1/1. Catalyzes the transfer of a methyl group from 5-methyltetrahydrofolate to homocysteine resulting in methionine formation. This is 5-methyltetrahydropteroyltriglutamate--homocysteine methyltransferase from Nitrosococcus oceani (strain ATCC 19707 / BCRC 17464 / JCM 30415 / NCIMB 11848 / C-107).